The sequence spans 638 residues: Zinc finger and BTB domain-containing protein 22 (638 aa).

In terms of domain architecture, BTB spans C57–A121. 4 disordered regions span residues C171–Q223, S229–V248, D335–E354, and E367–V451. Residues S189–F210 show a composition bias toward polar residues. Phosphoserine is present on S203. A C2H2-type 1; atypical zinc finger spans residues F483–H504. 2 consecutive C2H2-type zinc fingers follow at residues F510–H532 and Y538–H559. The disordered stretch occupies residues H564 to H638.

This sequence belongs to the krueppel C2H2-type zinc-finger protein family.

The protein localises to the nucleus. Its function is as follows. May be involved in transcriptional regulation. In Mus musculus (Mouse), this protein is Zinc finger and BTB domain-containing protein 22 (Zbtb22).